The primary structure comprises 267 residues: Strigolactone esterase RMS3 (267 aa).

S96 functions as the Nucleophile in the catalytic mechanism. Catalysis depends on residues D218 and H247.

The protein belongs to the AB hydrolase superfamily.

The protein localises to the cytoplasm. It localises to the nucleus. In terms of biological role, involved in strigolactone signaling pathway. Functions downstream of strigolactone synthesis, as a component of hormone signaling and as an enzyme that participates in the conversion of strigolactones to the bioactive form. Binds and hydrolyzes the synthetic strigolactone analog GR24 and its enantiomers in vitro. Forms a stable covalent complex with the D-ring of strigolactone, which is essential for hormone bioactivity. The D-ring is attached to His-247 of the catalytic triad. The hydrolysis of strigolactone into a covalently linked intermediate molecule is required to trigger strigolactone signaling. This mechanism defines RMS3 as a non-canonical hormone receptor with dual functions to generate and sense the active form of strigolactone. Strigolactones are hormones that inhibit tillering and shoot branching through the MAX-dependent pathway, contribute to the regulation of shoot architectural response to phosphate-limiting conditions and function as rhizosphere signal that stimulates hyphal branching of arbuscular mycorrhizal fungi and trigger seed germination of root parasitic weeds. This chain is Strigolactone esterase RMS3, found in Pisum sativum (Garden pea).